Consider the following 403-residue polypeptide: Large ribosomal subunit protein uL3 (403 aa).

Residues 1 to 37 (MSHRKFSAPRHGSLGFLPRKRSSRHRGKVKSFPKDDP) form a disordered region. The residue at position 13 (S13) is a Phosphoserine. The segment covering 18–31 (PRKRSSRHRGKVKS) has biased composition (basic residues). Residue K39 forms a Glycyl lysine isopeptide (Lys-Gly) (interchain with G-Cter in SUMO2) linkage. K136 bears the N6-acetyllysine mark. Glycyl lysine isopeptide (Lys-Gly) (interchain with G-Cter in SUMO2) cross-links involve residues K224 and K226. Residue H245 is modified to Tele-methylhistidine. N6-acetyllysine; alternate is present on residues K286 and K294. K286 participates in a covalent cross-link: Glycyl lysine isopeptide (Lys-Gly) (interchain with G-Cter in SUMO2); alternate. A Glycyl lysine isopeptide (Lys-Gly) (interchain with G-Cter in SUMO1); alternate cross-link involves residue K294. A Phosphoserine modification is found at S304. At K366 the chain carries N6-acetyllysine; alternate. K366 is covalently cross-linked (Glycyl lysine isopeptide (Lys-Gly) (interchain with G-Cter in SUMO2); alternate). Position 373 is an N6-acetyllysine (K373). Glycyl lysine isopeptide (Lys-Gly) (interchain with G-Cter in SUMO2) cross-links involve residues K386, K393, and K399.

This sequence belongs to the universal ribosomal protein uL3 family. As to quaternary structure, component of the large ribosomal subunit. Interacts with DHX33. Constitutively monomethylated at His-245 by METTL18. Methylation at His-245 regulates translation elongation by slowing ribosome traversal on tyrosine codons: slower elongation provides enough time for proper folding of synthesized proteins and prevents cellular aggregation of tyrosine-rich proteins. It is not required for incorporation of RPL3 into ribosomes.

It localises to the nucleus. The protein resides in the nucleolus. It is found in the cytoplasm. Functionally, component of the large ribosomal subunit. The ribosome is a large ribonucleoprotein complex responsible for the synthesis of proteins in the cell. This chain is Large ribosomal subunit protein uL3 (RPL3), found in Oryctolagus cuniculus (Rabbit).